A 660-amino-acid chain; its full sequence is DNA ligase (660 aa).

Residues 33–37, 82–83, and glutamate 110 contribute to the NAD(+) site; these read DFVYD and SL. The N6-AMP-lysine intermediate role is filled by lysine 112. NAD(+)-binding residues include arginine 133, glutamate 167, lysine 281, and lysine 305. Residues cysteine 396, cysteine 399, cysteine 412, and cysteine 417 each contribute to the Zn(2+) site. The 78-residue stretch at 583–660 folds into the BRCT domain; the sequence is DENKLLVGKK…SFEDIKSYLD (78 aa).

Belongs to the NAD-dependent DNA ligase family. LigA subfamily. It depends on Mg(2+) as a cofactor. Mn(2+) serves as cofactor.

It catalyses the reaction NAD(+) + (deoxyribonucleotide)n-3'-hydroxyl + 5'-phospho-(deoxyribonucleotide)m = (deoxyribonucleotide)n+m + AMP + beta-nicotinamide D-nucleotide.. DNA ligase that catalyzes the formation of phosphodiester linkages between 5'-phosphoryl and 3'-hydroxyl groups in double-stranded DNA using NAD as a coenzyme and as the energy source for the reaction. It is essential for DNA replication and repair of damaged DNA. This is DNA ligase from Borreliella afzelii (strain PKo) (Borrelia afzelii).